Reading from the N-terminus, the 611-residue chain is Protein KINASE OF THE OUTER CHLOROPLAST MEMBRANE 1 (611 aa).

At 1–555 the chain is on the cytoplasmic side; that stretch reads MASKIIAGKP…LEDFHWAVRP (555 aa). Residues 39-306 enclose the Protein kinase domain; sequence LKLRHRIGRG…TDILLVLKSL (268 aa). Residues 45 to 53 and K74 contribute to the ATP site; that span reads IGRGPFGDV. The chain crosses the membrane as a helical span at residues 556–572; it reads LLIAMGLLTAMKLGICV. Over 573–611 the chain is Chloroplast intermembrane; it reads RKKIGRSKDGKQRDGSTGQGDCKIPDGKGSDKSKWLVFF. The disordered stretch occupies residues 579 to 606; sequence SKDGKQRDGSTGQGDCKIPDGKGSDKSK. Residues 595-606 show a composition bias toward basic and acidic residues; the sequence is KIPDGKGSDKSK.

This sequence belongs to the protein kinase superfamily. Ser/Thr protein kinase family. As to quaternary structure, associates with the TOC complex containing, at least, translocons at the chloroplast envelope (e.g. TOCs and TICs such as TOC159, TOC75, TOC33 and TIC56).

Its subcellular location is the plastid. It is found in the chloroplast outer membrane. It catalyses the reaction L-seryl-[protein] + ATP = O-phospho-L-seryl-[protein] + ADP + H(+). It carries out the reaction L-threonyl-[protein] + ATP = O-phospho-L-threonyl-[protein] + ADP + H(+). Serine/threonine protein kinase acting as a regulatory component of the plastid protein import machinery by phosphorylating import receptors (e.g. the A-domain of TOC159, TOC120 and TOC132). Supports preprotein import and contributes to efficient chloroplast biogenesis, thus being required for survival during de-etiolation. The polypeptide is Protein KINASE OF THE OUTER CHLOROPLAST MEMBRANE 1 (Arabidopsis thaliana (Mouse-ear cress)).